The primary structure comprises 346 residues: Beta-hexosaminidase (346 aa).

Substrate-binding positions include D62, R70, R134, and 164–165; that span reads KH. H177 serves as the catalytic Proton donor/acceptor. D249 functions as the Nucleophile in the catalytic mechanism.

This sequence belongs to the glycosyl hydrolase 3 family. NagZ subfamily.

The protein resides in the cytoplasm. It carries out the reaction Hydrolysis of terminal non-reducing N-acetyl-D-hexosamine residues in N-acetyl-beta-D-hexosaminides.. Its pathway is cell wall biogenesis; peptidoglycan recycling. Its function is as follows. Plays a role in peptidoglycan recycling by cleaving the terminal beta-1,4-linked N-acetylglucosamine (GlcNAc) from peptide-linked peptidoglycan fragments, giving rise to free GlcNAc, anhydro-N-acetylmuramic acid and anhydro-N-acetylmuramic acid-linked peptides. The chain is Beta-hexosaminidase from Actinobacillus succinogenes (strain ATCC 55618 / DSM 22257 / CCUG 43843 / 130Z).